The sequence spans 276 residues: Dermonecrotic toxin LlSicTox-alphaIV1i (276 aa).

His5 is an active-site residue. Mg(2+)-binding residues include Glu25 and Asp27. Catalysis depends on His41, which acts as the Nucleophile. 2 disulfides stabilise this stretch: Cys45–Cys51 and Cys47–Cys193. Asp85 lines the Mg(2+) pocket.

This sequence belongs to the arthropod phospholipase D family. Class II subfamily. Mg(2+) serves as cofactor. In terms of tissue distribution, expressed by the venom gland.

It localises to the secreted. It catalyses the reaction an N-(acyl)-sphingosylphosphocholine = an N-(acyl)-sphingosyl-1,3-cyclic phosphate + choline. The catalysed reaction is an N-(acyl)-sphingosylphosphoethanolamine = an N-(acyl)-sphingosyl-1,3-cyclic phosphate + ethanolamine. The enzyme catalyses a 1-acyl-sn-glycero-3-phosphocholine = a 1-acyl-sn-glycero-2,3-cyclic phosphate + choline. It carries out the reaction a 1-acyl-sn-glycero-3-phosphoethanolamine = a 1-acyl-sn-glycero-2,3-cyclic phosphate + ethanolamine. In terms of biological role, dermonecrotic toxins cleave the phosphodiester linkage between the phosphate and headgroup of certain phospholipids (sphingolipid and lysolipid substrates), forming an alcohol (often choline) and a cyclic phosphate. This toxin acts on sphingomyelin (SM). It may also act on ceramide phosphoethanolamine (CPE), lysophosphatidylcholine (LPC) and lysophosphatidylethanolamine (LPE), but not on lysophosphatidylserine (LPS), and lysophosphatidylglycerol (LPG). It acts by transphosphatidylation, releasing exclusively cyclic phosphate products as second products. Induces dermonecrosis, hemolysis, increased vascular permeability, edema, inflammatory response, and platelet aggregation. This is Dermonecrotic toxin LlSicTox-alphaIV1i from Loxosceles laeta (South American recluse spider).